Here is a 329-residue protein sequence, read N- to C-terminus: Porphobilinogen deaminase (329 aa).

Position 250 is an S-(dipyrrolylmethanemethyl)cysteine (Cys-250).

This sequence belongs to the HMBS family. In terms of assembly, monomer. Dipyrromethane is required as a cofactor.

The enzyme catalyses 4 porphobilinogen + H2O = hydroxymethylbilane + 4 NH4(+). Its pathway is porphyrin-containing compound metabolism; protoporphyrin-IX biosynthesis; coproporphyrinogen-III from 5-aminolevulinate: step 2/4. Functionally, tetrapolymerization of the monopyrrole PBG into the hydroxymethylbilane pre-uroporphyrinogen in several discrete steps. The polypeptide is Porphobilinogen deaminase (Burkholderia mallei (strain NCTC 10247)).